The sequence spans 267 residues: 5'-nucleotidase SurE (267 aa).

Positions 14, 15, 45, and 100 each coordinate a divalent metal cation.

It belongs to the SurE nucleotidase family. Requires a divalent metal cation as cofactor.

The protein localises to the cytoplasm. It catalyses the reaction a ribonucleoside 5'-phosphate + H2O = a ribonucleoside + phosphate. In terms of biological role, nucleotidase that shows phosphatase activity on nucleoside 5'-monophosphates. This Methanosarcina barkeri (strain Fusaro / DSM 804) protein is 5'-nucleotidase SurE.